The following is a 922-amino-acid chain: Probable dipeptidyl-aminopeptidase B (922 aa).

Residues 1–16 show a composition bias toward basic and acidic residues; that stretch reads MATEKGHSRDDEERVP. A disordered region spans residues 1–21; that stretch reads MATEKGHSRDDEERVPLTRGS. Over 1-99 the chain is Cytoplasmic; it reads MATEKGHSRD…KPMHKSVKIA (99 aa). A helical; Signal-anchor for type II membrane protein membrane pass occupies residues 100–120; the sequence is LWSLLFLSLGGWSLAFVLFIF. The Vacuolar portion of the chain corresponds to 121–922; that stretch reads RSHDTYQTPI…AGLYKFKHLC (802 aa). N135, N200, N351, and N574 each carry an N-linked (GlcNAc...) asparagine glycan. Catalysis depends on S756, which acts as the Charge relay system. The N-linked (GlcNAc...) asparagine glycan is linked to N815. Active-site charge relay system residues include D833 and H866. Residue N902 is glycosylated (N-linked (GlcNAc...) asparagine).

The protein belongs to the peptidase S9B family.

The protein localises to the vacuole membrane. It carries out the reaction Release of an N-terminal dipeptide, Xaa-Yaa-|-Zaa-, from a polypeptide, preferentially when Yaa is Pro, provided Zaa is neither Pro nor hydroxyproline.. Functionally, type IV dipeptidyl-peptidase which removes N-terminal dipeptides sequentially from polypeptides having unsubstituted N-termini provided that the penultimate residue is proline. This chain is Probable dipeptidyl-aminopeptidase B (DAPB), found in Ajellomyces capsulatus (strain NAm1 / WU24) (Darling's disease fungus).